Here is a 35-residue protein sequence, read N- to C-terminus: Unknown protein 14 from 2D-PAGE (35 aa).

The disordered stretch occupies residues 1 to 35 (VVXXQTLXDXRGIYGDQGSIGPXXIXGLQGDRDAD).

The chain is Unknown protein 14 from 2D-PAGE from Bombyx mori (Silk moth).